Here is a 328-residue protein sequence, read N- to C-terminus: Protein URE2 (328 aa).

Positions 1 to 14 are enriched in polar residues; sequence MNMSDQRIPQNTGD. The interval 1–35 is disordered; sequence MNMSDQRIPQNTGDNSNNSNSNNNNNNNNNTHTIS. Low complexity predominate over residues 15 to 30; that stretch reads NSNNSNSNNNNNNNNN. A GST N-terminal domain is found at 86-170; it reads EGYTLFSHRS…YLVSKYLKEN (85 aa). The 150-residue stretch at 179–328 folds into the GST C-terminal domain; it reads NLIEQSQISS…PAVIRALRGD (150 aa).

It belongs to the GST superfamily. As to quaternary structure, homodimer.

Functionally, plays an important role in the cellular response to the nitrogen source. URE2 gene plays a major part in the repression of GLN1 and GDH2 genes by glutamine, and is required for the inactivation of glutamine synthetase. URE2 gene product may catalytically inactivate GLN3 in response to an increase in the intracellular concentration of glutamine. The protein is Protein URE2 (URE2) of Candida maltosa (Yeast).